Here is a 126-residue protein sequence, read N- to C-terminus: Phosphoribosyl-AMP cyclohydrolase (126 aa).

Asp-74 contacts Mg(2+). Position 75 (Cys-75) interacts with Zn(2+). Positions 76 and 78 each coordinate Mg(2+). 2 residues coordinate Zn(2+): Cys-92 and Cys-99.

It belongs to the PRA-CH family. As to quaternary structure, homodimer. Requires Mg(2+) as cofactor. The cofactor is Zn(2+).

It is found in the cytoplasm. The catalysed reaction is 1-(5-phospho-beta-D-ribosyl)-5'-AMP + H2O = 1-(5-phospho-beta-D-ribosyl)-5-[(5-phospho-beta-D-ribosylamino)methylideneamino]imidazole-4-carboxamide. The protein operates within amino-acid biosynthesis; L-histidine biosynthesis; L-histidine from 5-phospho-alpha-D-ribose 1-diphosphate: step 3/9. Functionally, catalyzes the hydrolysis of the adenine ring of phosphoribosyl-AMP. This Geotalea daltonii (strain DSM 22248 / JCM 15807 / FRC-32) (Geobacter daltonii) protein is Phosphoribosyl-AMP cyclohydrolase.